A 298-amino-acid polypeptide reads, in one-letter code: Small ribosomal subunit protein uS2 (298 aa).

It belongs to the universal ribosomal protein uS2 family.

The sequence is that of Small ribosomal subunit protein uS2 from Leifsonia xyli subsp. xyli (strain CTCB07).